The following is a 309-amino-acid chain: Branched-chain-amino-acid aminotransferase (309 aa).

At Lys160 the chain carries N6-(pyridoxal phosphate)lysine.

Belongs to the class-IV pyridoxal-phosphate-dependent aminotransferase family. Homohexamer. Requires pyridoxal 5'-phosphate as cofactor.

It catalyses the reaction L-leucine + 2-oxoglutarate = 4-methyl-2-oxopentanoate + L-glutamate. The enzyme catalyses L-isoleucine + 2-oxoglutarate = (S)-3-methyl-2-oxopentanoate + L-glutamate. The catalysed reaction is L-valine + 2-oxoglutarate = 3-methyl-2-oxobutanoate + L-glutamate. The protein operates within amino-acid biosynthesis; L-isoleucine biosynthesis; L-isoleucine from 2-oxobutanoate: step 4/4. Its pathway is amino-acid biosynthesis; L-leucine biosynthesis; L-leucine from 3-methyl-2-oxobutanoate: step 4/4. It participates in amino-acid biosynthesis; L-valine biosynthesis; L-valine from pyruvate: step 4/4. Functionally, acts on leucine, isoleucine and valine. The protein is Branched-chain-amino-acid aminotransferase (ilvE) of Salmonella typhi.